A 133-amino-acid chain; its full sequence is Small ribosomal subunit protein uS11 (133 aa).

This sequence belongs to the universal ribosomal protein uS11 family. In terms of assembly, part of the 30S ribosomal subunit. Interacts with proteins S7 and S18. Binds to IF-3.

Functionally, located on the platform of the 30S subunit, it bridges several disparate RNA helices of the 16S rRNA. Forms part of the Shine-Dalgarno cleft in the 70S ribosome. This is Small ribosomal subunit protein uS11 from Ralstonia nicotianae (strain ATCC BAA-1114 / GMI1000) (Ralstonia solanacearum).